A 225-amino-acid chain; its full sequence is uncharacterized protein (225 aa).

4 helical membrane-spanning segments follow: residues 40 to 60, 63 to 83, 151 to 171, and 176 to 196; these read LISL…LSIV, LAFF…PFSF, LSET…LTIL, and IFSL…IVSL.

It localises to the membrane. This is an uncharacterized protein from Saccharomyces cerevisiae (strain ATCC 204508 / S288c) (Baker's yeast).